A 320-amino-acid polypeptide reads, in one-letter code: Lipoyl synthase (320 aa).

The [4Fe-4S] cluster site is built by Cys-67, Cys-72, Cys-78, Cys-93, Cys-97, Cys-100, and Ser-307. Positions 79-296 (FNHGTATFMI…GVIAKEIGFT (218 aa)) constitute a Radical SAM core domain.

Belongs to the radical SAM superfamily. Lipoyl synthase family. The cofactor is [4Fe-4S] cluster.

The protein resides in the cytoplasm. The catalysed reaction is [[Fe-S] cluster scaffold protein carrying a second [4Fe-4S](2+) cluster] + N(6)-octanoyl-L-lysyl-[protein] + 2 oxidized [2Fe-2S]-[ferredoxin] + 2 S-adenosyl-L-methionine + 4 H(+) = [[Fe-S] cluster scaffold protein] + N(6)-[(R)-dihydrolipoyl]-L-lysyl-[protein] + 4 Fe(3+) + 2 hydrogen sulfide + 2 5'-deoxyadenosine + 2 L-methionine + 2 reduced [2Fe-2S]-[ferredoxin]. Its pathway is protein modification; protein lipoylation via endogenous pathway; protein N(6)-(lipoyl)lysine from octanoyl-[acyl-carrier-protein]: step 2/2. Functionally, catalyzes the radical-mediated insertion of two sulfur atoms into the C-6 and C-8 positions of the octanoyl moiety bound to the lipoyl domains of lipoate-dependent enzymes, thereby converting the octanoylated domains into lipoylated derivatives. The sequence is that of Lipoyl synthase from Pseudoalteromonas atlantica (strain T6c / ATCC BAA-1087).